We begin with the raw amino-acid sequence, 626 residues long: Basic helix-loop-helix ARNT-like protein 1 (626 aa).

The disordered stretch occupies residues 1-60; it reads MADQRMDISSTISDFMSPGATDLLSSPLGTSGMDCNRKRKGSSTDYQESMDTDKDDPHGR. Ser-17 is modified (phosphoserine; by GSK3-beta). Thr-21 is modified (phosphothreonine; by GSK3-beta). Positions 36–41 match the Nuclear localization signal motif; it reads NRKRKG. The segment covering 51-60 has biased composition (basic and acidic residues); the sequence is DTDKDDPHGR. In terms of domain architecture, bHLH spans 72 to 125; the sequence is NAREAHSQIEKRRRDKMNSFIDELASLVPTCNAMSRKLDKLTVLRMAVQHMKTL. A Phosphoserine modification is found at Ser-78. Position 90 is a phosphoserine; by CK2 (Ser-90). Positions 142-152 match the Nuclear export signal 1 motif; sequence LSDDELKHLIL. One can recognise a PAS 1 domain in the interval 143-215; sequence SDDELKHLIL…EQLSSSDTAP (73 aa). Residue Lys-252 forms a Glycyl lysine isopeptide (Lys-Gly) (interchain with G-Cter in SUMO2 and SUMO3) linkage. Lys-259 participates in a covalent cross-link: Glycyl lysine isopeptide (Lys-Gly) (interchain with G-Cter in SUMO); alternate. Lys-259 participates in a covalent cross-link: Glycyl lysine isopeptide (Lys-Gly) (interchain with G-Cter in SUMO2); alternate. The PAS 2 domain occupies 326–396; it reads PQPVNGEIRV…ECHRQVLQTR (71 aa). The short motif at 361-369 is the Nuclear export signal 2 element; it reads LAYLPQELL. A PAC domain is found at 401–444; that stretch reads TNCYKFKIKDGSFITLRSRWFSFMNPWTKEVEYIVSTNTVVLAN. 2 disordered regions span residues 457 to 493 and 510 to 597; these read TASP…AGAG and RGSS…SNDE. Residues 484–493 show a composition bias toward gly residues; that stretch reads IPGGTRAGAG. Residues 508–588 form an interaction with CIART region; it reads RIRGSSPSSC…IGIDMIDNDQ (81 aa). A compositionally biased stretch (low complexity) spans 511-521; sequence GSSPSSCGSSP. Residue Lys-538 is modified to N6-acetyllysine.

Component of the circadian clock oscillator which includes the CRY1/2 proteins, CLOCK or NPAS2, BMAL1 or BMAL2, CSNK1D and/or CSNK1E, TIMELESS and the PER1/2/3 proteins. Forms a heterodimer with CLOCK. The CLOCK-BMAL1 heterodimer is required for E-box-dependent transactivation, for CLOCK nuclear translocation and degradation, and, for phosphorylation of both CLOCK and BMAL1. Part of a nuclear complex which also includes RACK1 and PRKCA; RACK1 and PRKCA are recruited to the complex in a circadian manner. Interacts with NPAS2. Interacts with EZH2. Interacts with SUMO3. Interacts with SIRT1. Interacts with AHR. Interacts with ID1, ID2 and ID3. Interacts with DDX4. Interacts with OGT. Interacts with EED and SUZ12. Interacts with MTA1. Interacts with CIART. Interacts with HSP90. Interacts with KAT2B and EP300. Interacts with BHLHE40/DEC1 and BHLHE41/DEC2. Interacts with RELB and the interaction is enhanced in the presence of CLOCK. Interacts with PER1, PER2, CRY1 and CRY2 and this interaction requires a translocation to the nucleus. Interaction of the CLOCK-BMAL1 heterodimer with PER or CRY inhibits transcription activation. Interaction of the CLOCK-BMAL1 with CRY1 is independent of DNA but with PER2 is off DNA. The CLOCK-BMAL1 heterodimer interacts with GSK3B. Interacts with KDM5A. Interacts with KMT2A; in a circadian manner. Interacts with UBE3A. Interacts with PRKCG. Interacts with MAGEL2. Interacts with NCOA2. Interacts with THRAP3. The CLOCK-BMAL1 heterodimer interacts with PASD1. Interacts with PASD1. Interacts with USP9X. Interacts with PIWIL2 (via PIWI domain). Interacts with HDAC3. Interacts with HNF4A. In terms of processing, ubiquitinated, leading to its proteasomal degradation. Deubiquitinated by USP9X. O-glycosylated; contains O-GlcNAc. O-glycosylation by OGT prevents protein degradation by inhibiting ubiquitination. It also stabilizes the CLOCK-BMAL1 heterodimer thereby increasing CLOCK-BMAL1-mediated transcription of genes in the negative loop of the circadian clock such as PER1/2/3 and CRY1/2. Post-translationally, acetylated on Lys-538 by CLOCK during the repression phase of the circadian cycle. Acetylation facilitates recruitment of CRY1 protein and initiates the repression phase of the circadian cycle. Acetylated at Lys-538 by KAT5 during the activation phase of the cycle, leading to recruitment of the positive transcription elongation factor b (P-TEFb) and BRD4, followed by productive elongation of circadian transcripts. Deacetylated by SIRT1, which may result in decreased protein stability. In terms of processing, phosphorylated upon dimerization with CLOCK. Phosphorylation enhances the transcriptional activity, alters the subcellular localization and decreases the stability of the CLOCK-BMAL1 heterodimer by promoting its degradation. Phosphorylation shows circadian variations in the liver with a peak between CT10 to CT14. Phosphorylation at Ser-90 by CK2 is essential for its nuclear localization, its interaction with CLOCK and controls CLOCK nuclear entry. Dephosphorylation at Ser-78 is important for dimerization with CLOCK and transcriptional activity. Sumoylated on Lys-259 upon dimerization with CLOCK. Predominantly conjugated to poly-SUMO2/3 rather than SUMO1 and the level of these conjugates undergo rhythmic variation, peaking at CT9-CT12. Sumoylation localizes it exclusively to the PML body and promotes its ubiquitination in the PML body, ubiquitin-dependent proteasomal degradation and the transcriptional activity of the CLOCK-BMAL1 heterodimer. Post-translationally, undergoes lysosome-mediated degradation in a time-dependent manner in the liver.

Its subcellular location is the nucleus. It localises to the cytoplasm. The protein resides in the PML body. Functionally, transcriptional activator which forms a core component of the circadian clock. The circadian clock, an internal time-keeping system, regulates various physiological processes through the generation of approximately 24 hour circadian rhythms in gene expression, which are translated into rhythms in metabolism and behavior. It is derived from the Latin roots 'circa' (about) and 'diem' (day) and acts as an important regulator of a wide array of physiological functions including metabolism, sleep, body temperature, blood pressure, endocrine, immune, cardiovascular, and renal function. Consists of two major components: the central clock, residing in the suprachiasmatic nucleus (SCN) of the brain, and the peripheral clocks that are present in nearly every tissue and organ system. Both the central and peripheral clocks can be reset by environmental cues, also known as Zeitgebers (German for 'timegivers'). The predominant Zeitgeber for the central clock is light, which is sensed by retina and signals directly to the SCN. The central clock entrains the peripheral clocks through neuronal and hormonal signals, body temperature and feeding-related cues, aligning all clocks with the external light/dark cycle. Circadian rhythms allow an organism to achieve temporal homeostasis with its environment at the molecular level by regulating gene expression to create a peak of protein expression once every 24 hours to control when a particular physiological process is most active with respect to the solar day. Transcription and translation of core clock components (CLOCK, NPAS2, BMAL1, BMAL2, PER1, PER2, PER3, CRY1 and CRY2) plays a critical role in rhythm generation, whereas delays imposed by post-translational modifications (PTMs) are important for determining the period (tau) of the rhythms (tau refers to the period of a rhythm and is the length, in time, of one complete cycle). A diurnal rhythm is synchronized with the day/night cycle, while the ultradian and infradian rhythms have a period shorter and longer than 24 hours, respectively. Disruptions in the circadian rhythms contribute to the pathology of cardiovascular diseases, cancer, metabolic syndromes and aging. A transcription/translation feedback loop (TTFL) forms the core of the molecular circadian clock mechanism. Transcription factors, CLOCK or NPAS2 and BMAL1 or BMAL2, form the positive limb of the feedback loop, act in the form of a heterodimer and activate the transcription of core clock genes and clock-controlled genes (involved in key metabolic processes), harboring E-box elements (5'-CACGTG-3') within their promoters. The core clock genes: PER1/2/3 and CRY1/2 which are transcriptional repressors form the negative limb of the feedback loop and interact with the CLOCK|NPAS2-BMAL1|BMAL2 heterodimer inhibiting its activity and thereby negatively regulating their own expression. This heterodimer also activates nuclear receptors NR1D1, NR1D2, RORA, RORB and RORG, which form a second feedback loop and which activate and repress BMAL1 transcription, respectively. BMAL1 positively regulates myogenesis and negatively regulates adipogenesis via the transcriptional control of the genes of the canonical Wnt signaling pathway. Plays a role in normal pancreatic beta-cell function; regulates glucose-stimulated insulin secretion via the regulation of antioxidant genes NFE2L2/NRF2 and its targets SESN2, PRDX3, CCLC and CCLM. Negatively regulates the mTORC1 signaling pathway; regulates the expression of MTOR and DEPTOR. Controls diurnal oscillations of Ly6C inflammatory monocytes; rhythmic recruitment of the PRC2 complex imparts diurnal variation to chemokine expression that is necessary to sustain Ly6C monocyte rhythms. Regulates the expression of HSD3B2, STAR, PTGS2, CYP11A1, CYP19A1 and LHCGR in the ovary and also the genes involved in hair growth. Plays an important role in adult hippocampal neurogenesis by regulating the timely entry of neural stem/progenitor cells (NSPCs) into the cell cycle and the number of cell divisions that take place prior to cell-cycle exit. Regulates the circadian expression of CIART. The CLOCK-BMAL1 heterodimer regulates the circadian expression of SERPINE1/PAI1, VWF, B3, CCRN4L/NOC, NAMPT, DBP, MYOD1, PPARGC1A, PPARGC1B, SIRT1, GYS2, F7, NGFR, GNRHR, BHLHE40/DEC1, ATF4, MTA1 and also genes implicated in glucose and lipid metabolism. Promotes rhythmic chromatin opening, regulating the DNA accessibility of other transcription factors. The NPAS2-BMAL1 heterodimer positively regulates the expression of MAOA, F7 and LDHA and modulates the circadian rhythm of daytime contrast sensitivity by regulating the rhythmic expression of adenylate cyclase type 1 (ADCY1) in the retina. The preferred binding motif for the CLOCK-BMAL1 heterodimer is 5'-CACGTGA-3', which contains a flanking adenine nucleotide at the 3-prime end of the canonical 6-nucleotide E-box sequence. CLOCK specifically binds to the half-site 5'-CAC-3', while BMAL1 binds to the half-site 5'-GTGA-3'. The CLOCK-BMAL1 heterodimer also recognizes the non-canonical E-box motifs 5'-AACGTGA-3' and 5'-CATGTGA-3'. Essential for the rhythmic interaction of CLOCK with ASS1 and plays a critical role in positively regulating CLOCK-mediated acetylation of ASS1. Plays a role in protecting against lethal sepsis by limiting the expression of immune checkpoint protein CD274 in macrophages in a PKM2-dependent manner. Regulates the diurnal rhythms of skeletal muscle metabolism via transcriptional activation of genes promoting triglyceride synthesis (DGAT2) and metabolic efficiency (COQ10B). The chain is Basic helix-loop-helix ARNT-like protein 1 (BMAL1) from Equus caballus (Horse).